The primary structure comprises 103 residues: Mitochondrial import inner membrane translocase subunit Tim10 B (103 aa).

Positions 28-52 match the Twin CX3C motif motif; that stretch reads CFQRCVPSLHHRALDAEEEACLHSC. 2 cysteine pairs are disulfide-bonded: Cys28–Cys52 and Cys32–Cys48.

This sequence belongs to the small Tim family. In terms of assembly, component of the TIM22 complex, which core is composed of TIMM22, associated with TIMM10 (TIMM10A and/or TIMM10B), TIMM9, AGK and TIMM29. Ubiquitous, with highest expression in heart, kidney, liver and skeletal muscle.

It is found in the mitochondrion inner membrane. Component of the TIM22 complex, a complex that mediates the import and insertion of multi-pass transmembrane proteins into the mitochondrial inner membrane. The TIM22 complex forms a twin-pore translocase that uses the membrane potential as the external driving force. In the TIM22 complex, it may act as a docking point for the soluble 70 kDa complex that guides the target proteins in transit through the aqueous mitochondrial intermembrane space. The chain is Mitochondrial import inner membrane translocase subunit Tim10 B (TIMM10B) from Homo sapiens (Human).